The chain runs to 220 residues: Redox-sensing transcriptional repressor Rex (220 aa).

The H-T-H motif DNA-binding region spans 17 to 56; sequence LYARSLRYLLQEGVESVSSQELGDRINVTAAQIRKDLSYF. 91–96 is an NAD(+) binding site; it reads GIGHLG.

It belongs to the transcriptional regulatory Rex family. As to quaternary structure, homodimer.

Its subcellular location is the cytoplasm. Its function is as follows. Modulates transcription in response to changes in cellular NADH/NAD(+) redox state. This Roseiflexus sp. (strain RS-1) protein is Redox-sensing transcriptional repressor Rex.